Reading from the N-terminus, the 148-residue chain is Ribosome maturation factor RimP (148 aa).

Belongs to the RimP family.

Its subcellular location is the cytoplasm. Required for maturation of 30S ribosomal subunits. The chain is Ribosome maturation factor RimP from Treponema denticola (strain ATCC 35405 / DSM 14222 / CIP 103919 / JCM 8153 / KCTC 15104).